The chain runs to 295 residues: Nucleotide-binding protein EF_0766 (295 aa).

12-19 (GMSGAGKT) contacts ATP. GTP is bound at residue 62-65 (DLRS).

The protein belongs to the RapZ-like family.

Displays ATPase and GTPase activities. The polypeptide is Nucleotide-binding protein EF_0766 (Enterococcus faecalis (strain ATCC 700802 / V583)).